The sequence spans 90 residues: Envelope protein US9 homolog (90 aa).

At 1-63 (MEPLRLADAE…IRRRRRQTRA (63 aa)) the chain is on the intravirion side. The Di-leucine internalization motif motif lies at 12–13 (LL). Residues 29-38 (EAYYTESDDE) are acidic. Residues 64–84 (AGFVAAFVLVALISGGLGALM) traverse the membrane as a helical; Signal-anchor for type II membrane protein segment. Residues 85–90 (CWLAYR) are Virion surface-facing.

The protein belongs to the alphaherpesvirinae envelope protein US9 family. Post-translationally, phosphorylated on serines within the acidic cluster. Phosphorylation determines whether endocytosed viral US9 traffics to the trans-Golgi network or recycles to the cell membrane.

The protein resides in the virion membrane. It is found in the host Golgi apparatus membrane. The protein localises to the host smooth endoplasmic reticulum membrane. It localises to the host cell membrane. Essential for the anterograde spread of the infection throughout the host nervous system. Together with the gE/gI heterodimer, US9 is involved in the sorting and transport of viral structural components toward axon tips. This chain is Envelope protein US9 homolog, found in Cercopithecine herpesvirus 1 (CeHV-1).